A 323-amino-acid chain; its full sequence is Caspase-1 (323 aa).

A propeptide spanning residues 1-33 (MTDECVTRNYGVGIRSPNGSENRGSFIMADNTD) is cleaved from the precursor. Catalysis depends on residues His154 and Cys196. The propeptide occupies 203–215 (GGITLEKGVTETD).

The protein belongs to the peptidase C14A family. As to quaternary structure, heterotetramer that consists of two anti-parallel arranged heterodimers, each one formed by a 22 kDa (p22) and a 13 kDa (p13) subunit.

Involved in the activation cascade of caspases responsible for apoptosis execution. Proteolytically cleaves poly(ADP-ribose) polymerase (PARP). Loss of zygotic DCP-1 function causes larval lethality and melanotic tumors. The chain is Caspase-1 (Dcp-1) from Drosophila melanogaster (Fruit fly).